A 62-amino-acid chain; its full sequence is Double zinc ribbon protein TK0111 (62 aa).

Zn(2+)-binding residues include Cys13, Cys16, Cys31, Cys34, Cys42, Cys45, Cys54, and Cys57.

In terms of assembly, crystallized in association with 70S ribosomes. Zn(2+) is required as a cofactor.

This is Double zinc ribbon protein TK0111 from Thermococcus kodakarensis (strain ATCC BAA-918 / JCM 12380 / KOD1) (Pyrococcus kodakaraensis (strain KOD1)).